A 232-amino-acid polypeptide reads, in one-letter code: Imidazoleglycerol-phosphate dehydratase (232 aa).

It belongs to the imidazoleglycerol-phosphate dehydratase family.

It carries out the reaction D-erythro-1-(imidazol-4-yl)glycerol 3-phosphate = 3-(imidazol-4-yl)-2-oxopropyl phosphate + H2O. The protein operates within amino-acid biosynthesis; L-histidine biosynthesis; L-histidine from 5-phospho-alpha-D-ribose 1-diphosphate: step 6/9. This is Imidazoleglycerol-phosphate dehydratase (HIS3) from Lachancea kluyveri (strain ATCC 58438 / CBS 3082 / BCRC 21498 / NBRC 1685 / JCM 7257 / NCYC 543 / NRRL Y-12651) (Yeast).